An 87-amino-acid chain; its full sequence is Small ribosomal subunit protein bS20 (87 aa).

The interval 1–26 is disordered; the sequence is MANIKSAKKRAIQAEKARKHNASRRS.

It belongs to the bacterial ribosomal protein bS20 family.

Binds directly to 16S ribosomal RNA. This is Small ribosomal subunit protein bS20 from Tolumonas auensis (strain DSM 9187 / NBRC 110442 / TA 4).